Here is a 258-residue protein sequence, read N- to C-terminus: Proteasome subunit beta type-1 (258 aa).

This sequence belongs to the peptidase T1B family. In terms of assembly, the 26S proteasome consists of a 20S proteasome core and two 19S regulatory subunits. The 20S proteasome core is composed of 28 subunits that are arranged in four stacked rings, resulting in a barrel-shaped structure. The two end rings are each formed by seven alpha subunits, and the two central rings are each formed by seven beta subunits. The catalytic chamber with the active sites is on the inside of the barrel.

The protein localises to the cytoplasm. The protein resides in the nucleus. Functionally, non-catalytic component of the proteasome, a multicatalytic proteinase complex which is characterized by its ability to cleave peptides with Arg, Phe, Tyr, Leu, and Glu adjacent to the leaving group at neutral or slightly basic pH. The proteasome has an ATP-dependent proteolytic activity. The sequence is that of Proteasome subunit beta type-1 (pbs-6) from Caenorhabditis elegans.